Consider the following 120-residue polypeptide: GATA transcription factor 23 (120 aa).

The GATA-type zinc finger occupies 22 to 76; that stretch reads KGTIRCCSECKTTKTPMWRGGPTGPKSLCNACGIRHRKQRRSELLGIHIIRSHKS.

Belongs to the type IV zinc-finger family. Class B subfamily.

The protein localises to the nucleus. In terms of biological role, transcriptional regulator that specifically binds 5'-GATA-3' or 5'-GAT-3' motifs within gene promoters. The protein is GATA transcription factor 23 (GATA23) of Arabidopsis thaliana (Mouse-ear cress).